The primary structure comprises 429 residues: Glutamate-1-semialdehyde 2,1-aminomutase 1 (429 aa).

Lysine 268 carries the post-translational modification N6-(pyridoxal phosphate)lysine.

This sequence belongs to the class-III pyridoxal-phosphate-dependent aminotransferase family. HemL subfamily. In terms of assembly, homodimer. The cofactor is pyridoxal 5'-phosphate.

The protein localises to the cytoplasm. It catalyses the reaction (S)-4-amino-5-oxopentanoate = 5-aminolevulinate. It functions in the pathway porphyrin-containing compound metabolism; protoporphyrin-IX biosynthesis; 5-aminolevulinate from L-glutamyl-tRNA(Glu): step 2/2. This Staphylococcus saprophyticus subsp. saprophyticus (strain ATCC 15305 / DSM 20229 / NCIMB 8711 / NCTC 7292 / S-41) protein is Glutamate-1-semialdehyde 2,1-aminomutase 1.